The sequence spans 413 residues: PAB1-binding protein 2 (413 aa).

The span at 1–23 shows a compositional bias: low complexity; it reads MSTETTKPSITTTPTTVLVSPNT. The segment at 1 to 36 is disordered; it reads MSTETTKPSITTTPTTVLVSPNTLKRKKGEDTSEEQ. 3 KH domains span residues 66 to 130, 148 to 213, and 330 to 394; these read DVHL…YGMI, EISI…TFYI, and FVQQ…IMLI.

As to quaternary structure, interacts with PAB1.

It localises to the nucleus. The protein is PAB1-binding protein 2 (PBP2) of Saccharomyces cerevisiae (strain ATCC 204508 / S288c) (Baker's yeast).